Here is a 149-residue protein sequence, read N- to C-terminus: Large ribosomal subunit protein uL11 (149 aa).

Belongs to the universal ribosomal protein uL11 family. In terms of assembly, part of the ribosomal stalk of the 50S ribosomal subunit. Interacts with L10 and the large rRNA to form the base of the stalk. L10 forms an elongated spine to which L12 dimers bind in a sequential fashion forming a multimeric L10(L12)X complex. Post-translationally, one or more lysine residues are methylated.

In terms of biological role, forms part of the ribosomal stalk which helps the ribosome interact with GTP-bound translation factors. This chain is Large ribosomal subunit protein uL11, found in Methylobacterium sp. (strain 4-46).